Here is a 603-residue protein sequence, read N- to C-terminus: Proline--tRNA ligase (603 aa).

The protein belongs to the class-II aminoacyl-tRNA synthetase family. ProS type 1 subfamily. Homodimer.

Its subcellular location is the cytoplasm. It carries out the reaction tRNA(Pro) + L-proline + ATP = L-prolyl-tRNA(Pro) + AMP + diphosphate. Catalyzes the attachment of proline to tRNA(Pro) in a two-step reaction: proline is first activated by ATP to form Pro-AMP and then transferred to the acceptor end of tRNA(Pro). As ProRS can inadvertently accommodate and process non-cognate amino acids such as alanine and cysteine, to avoid such errors it has two additional distinct editing activities against alanine. One activity is designated as 'pretransfer' editing and involves the tRNA(Pro)-independent hydrolysis of activated Ala-AMP. The other activity is designated 'posttransfer' editing and involves deacylation of mischarged Ala-tRNA(Pro). The misacylated Cys-tRNA(Pro) is not edited by ProRS. This chain is Proline--tRNA ligase, found in Microcystis aeruginosa (strain NIES-843 / IAM M-2473).